A 1804-amino-acid chain; its full sequence is Obscurin-like protein 1 (1804 aa).

S10 bears the Phosphoserine mark. Ig-like domains lie at 12–100, 128–225, 241–330, and 339–425; these read PCFL…AAVT, PKFL…ALLQ, PKPV…QTLS, and PRLR…ANVT. The tract at residues 17-19 is interaction with TTN; the sequence is FPR. C33 and C84 are disulfide-bonded. The interval 85 to 94 is interaction with TTN; it reads RARNAAGEAY. A disulfide bridge connects residues C149 and C209. Residues 227–249 are disordered; sequence HQPRESPPQDPDENPKPVLEPLK. Disulfide bonds link C267–C319 and C362–C412. The region spanning 517-615 is the Fibronectin type-III domain; sequence PPGPPVMVEM…FNGSAHLVPT (99 aa). 10 Ig-like domains span residues 720 to 800, 804 to 891, 902 to 982, 986 to 1075, 1078 to 1165, 1176 to 1261, 1266 to 1442, 1536 to 1621, 1625 to 1694, and 1702 to 1798; these read PQDK…FGVT, PPVH…FTVT, PSSE…FTIT, PPVR…VTVT, PERI…FNVS, PEAA…FNVQ, PPVK…ARLS, PVTI…ARLT, REVS…EDTG, and PAQS…ADTQ. Intrachain disulfides connect C738/C788, C829/C879, C920/C970, C1011/C1061, C1103/C1153, C1195/C1245, C1289/C1430, and C1558/C1608.

In terms of assembly, component of the 3M complex, composed of core components CUL7, CCDC8 and OBSL1. Interacts with CCDC8. Interacts with CUL7; the interaction is direct. Interacts with FBXW8. Interacts (via N-terminal Ig-like domain) with TTN/titin (via C-terminal Ig-like domain); the interaction is direct.

Its subcellular location is the cytoplasm. The protein localises to the perinuclear region. The protein resides in the golgi apparatus. Functionally, core component of the 3M complex, a complex required to regulate microtubule dynamics and genome integrity. It is unclear how the 3M complex regulates microtubules, it could act by controlling the level of a microtubule stabilizer. Acts as a regulator of the Cul7-RING(FBXW8) ubiquitin-protein ligase, playing a critical role in the ubiquitin ligase pathway that regulates Golgi morphogenesis and dendrite patterning in brain. Required to localize CUL7 to the Golgi apparatus in neurons. This is Obscurin-like protein 1 (Obsl1) from Mus musculus (Mouse).